The following is a 314-amino-acid chain: Methionyl-tRNA formyltransferase (314 aa).

113–116 serves as a coordination point for (6S)-5,6,7,8-tetrahydrofolate; it reads SLLP.

The protein belongs to the Fmt family.

It catalyses the reaction L-methionyl-tRNA(fMet) + (6R)-10-formyltetrahydrofolate = N-formyl-L-methionyl-tRNA(fMet) + (6S)-5,6,7,8-tetrahydrofolate + H(+). Attaches a formyl group to the free amino group of methionyl-tRNA(fMet). The formyl group appears to play a dual role in the initiator identity of N-formylmethionyl-tRNA by promoting its recognition by IF2 and preventing the misappropriation of this tRNA by the elongation apparatus. This Serratia proteamaculans (strain 568) protein is Methionyl-tRNA formyltransferase.